Reading from the N-terminus, the 145-residue chain is Large ribosomal subunit protein uL15 (145 aa).

Residues 1–42 (MELHTLKATPGSRKAKHRVGRGHAAGKGKQAGRGQSGQTKRS) are disordered. The span at 13–26 (RKAKHRVGRGHAAG) shows a compositional bias: basic residues.

The protein belongs to the universal ribosomal protein uL15 family. As to quaternary structure, part of the 50S ribosomal subunit.

Its function is as follows. Binds to the 23S rRNA. This chain is Large ribosomal subunit protein uL15, found in Metamycoplasma arthritidis (strain 158L3-1) (Mycoplasma arthritidis).